We begin with the raw amino-acid sequence, 74 residues long: Defensin Lc-def (74 aa).

Residues 1–27 form the signal peptide; it reads MEKKTVAALSFLFIVLFVAQEIAVTEA. Disulfide bonds link C30–C74, C41–C62, C47–C68, and C51–C70.

The protein resides in the secreted. In terms of biological role, has antifungal activity against the phytopathogenic fungus A.niger VKM F-2259, but not against A.alternata VKM F-3047. Does not inhibit trypsin or chymotrypsin. In Lens culinaris subsp. culinaris (Cultivated lentil), this protein is Defensin Lc-def.